The primary structure comprises 595 residues: Coronatine-insensitive protein homolog 1a (595 aa).

The F-box domain occupies 20–62 (WVPDEALHLVMGHVEDPRDREAASRVCRRWHRIDALTRKHVTV). Jasmonate contacts are provided by R90, R351, Y389, R412, and R499.

Interacts with TIFY6A/JAZ3, TIFY6B/JAZ4 and TIFY11D/JAZ12 in a coronatine-dependent manner. Interacts with TIFY9/JAZ5, TIFY10A/JAZ6, TIFY10B/JAZ7, TIFY11A/JAZ9 and TIFY11C/JAZ11 in a coronatine-dependent manner.

Functionally, involved in jasmonate (JA) signaling. Required for jasmonate signaling in plant defense responses. Can complement Arabidopsis coi1-1 mutant and restore jasmonate signaling. Required for JA-regulated defense responses to infestation by the leaffolder Cnaphalocrocis medinalis. May act on an initial response of jasmonate-regulated gene expression toward drought tolerance as part of a BHLH148-TIFY11D/JAZ12-COI1A complex. Component of SCF(COI1) E3 ubiquitin ligase complexes, which may mediate the ubiquitination and subsequent proteasomal degradation of target proteins, including TIFY/JAZ family. The polypeptide is Coronatine-insensitive protein homolog 1a (Oryza sativa subsp. indica (Rice)).